The following is a 319-amino-acid chain: HTH-type transcriptional regulator YidZ (319 aa).

The HTH lysR-type domain occupies 8–65; the sequence is LDLNLLLCLQLLMQERSVTKAAKRMNVTPSAVSKSLSKLRTWFDDPLFVNTPLGLTPT. Positions 25 to 44 form a DNA-binding region, H-T-H motif; that stretch reads VTKAAKRMNVTPSAVSKSLS.

It belongs to the LysR transcriptional regulatory family.

Its function is as follows. Involved in anaerobic NO protection. This Citrobacter koseri (strain ATCC BAA-895 / CDC 4225-83 / SGSC4696) protein is HTH-type transcriptional regulator YidZ.